A 169-amino-acid polypeptide reads, in one-letter code: Crossover junction endodeoxyribonuclease RuvC (169 aa).

Active-site residues include aspartate 11, glutamate 71, and aspartate 143. Positions 11, 71, and 143 each coordinate Mg(2+).

It belongs to the RuvC family. As to quaternary structure, homodimer which binds Holliday junction (HJ) DNA. The HJ becomes 2-fold symmetrical on binding to RuvC with unstacked arms; it has a different conformation from HJ DNA in complex with RuvA. In the full resolvosome a probable DNA-RuvA(4)-RuvB(12)-RuvC(2) complex forms which resolves the HJ. Requires Mg(2+) as cofactor.

The protein localises to the cytoplasm. It catalyses the reaction Endonucleolytic cleavage at a junction such as a reciprocal single-stranded crossover between two homologous DNA duplexes (Holliday junction).. Its function is as follows. The RuvA-RuvB-RuvC complex processes Holliday junction (HJ) DNA during genetic recombination and DNA repair. Endonuclease that resolves HJ intermediates. Cleaves cruciform DNA by making single-stranded nicks across the HJ at symmetrical positions within the homologous arms, yielding a 5'-phosphate and a 3'-hydroxyl group; requires a central core of homology in the junction. The consensus cleavage sequence is 5'-(A/T)TT(C/G)-3'. Cleavage occurs on the 3'-side of the TT dinucleotide at the point of strand exchange. HJ branch migration catalyzed by RuvA-RuvB allows RuvC to scan DNA until it finds its consensus sequence, where it cleaves and resolves the cruciform DNA. The protein is Crossover junction endodeoxyribonuclease RuvC of Rhizobium etli (strain CIAT 652).